The primary structure comprises 428 residues: 3-phosphoshikimate 1-carboxyvinyltransferase (428 aa).

Lys-20, Ser-21, and Arg-25 together coordinate 3-phosphoshikimate. Lys-20 is a phosphoenolpyruvate binding site. Gly-93 and Arg-122 together coordinate phosphoenolpyruvate. Residues Ser-167, Gln-169, Asp-317, and Lys-344 each contribute to the 3-phosphoshikimate site. Gln-169 is a binding site for phosphoenolpyruvate. Residue Asp-317 is the Proton acceptor of the active site. 2 residues coordinate phosphoenolpyruvate: Arg-348 and Arg-390.

It belongs to the EPSP synthase family. In terms of assembly, monomer.

It is found in the cytoplasm. It catalyses the reaction 3-phosphoshikimate + phosphoenolpyruvate = 5-O-(1-carboxyvinyl)-3-phosphoshikimate + phosphate. Its pathway is metabolic intermediate biosynthesis; chorismate biosynthesis; chorismate from D-erythrose 4-phosphate and phosphoenolpyruvate: step 6/7. In terms of biological role, catalyzes the transfer of the enolpyruvyl moiety of phosphoenolpyruvate (PEP) to the 5-hydroxyl of shikimate-3-phosphate (S3P) to produce enolpyruvyl shikimate-3-phosphate and inorganic phosphate. The protein is 3-phosphoshikimate 1-carboxyvinyltransferase of Leptospira biflexa serovar Patoc (strain Patoc 1 / ATCC 23582 / Paris).